The primary structure comprises 113 residues: Colipase (113 aa).

An N-terminal signal peptide occupies residues 1-18 (MEKVLVLLLVSLLAVAYA). The propeptide at 19–23 (APGPR) is enterostatin, activation peptide. 5 cysteine pairs are disulfide-bonded: C35–C46, C41–C57, C45–C79, C67–C87, and C81–C105.

It belongs to the colipase family. In terms of assembly, forms a 1:1 stoichiometric complex with pancreatic lipase. Expressed by the pancreas.

It is found in the secreted. In terms of biological role, colipase is a cofactor of pancreatic lipase. It allows the lipase to anchor itself to the lipid-water interface. Without colipase the enzyme is washed off by bile salts, which have an inhibitory effect on the lipase. Its function is as follows. Enterostatin has a biological activity as a satiety signal. The protein is Colipase of Mus musculus (Mouse).